The following is a 415-amino-acid chain: DNA polymerase IV (415 aa).

Residues 15 to 196 (ILHVDMNCFF…LPVGAMHGIG (182 aa)) form the UmuC domain. Asp-19 and Asp-115 together coordinate Mg(2+). Glu-116 is an active-site residue. The segment at 238–260 (KGMDDRQVDPSQMGQHKSVGNSM) is disordered. Residues 246–260 (DPSQMGQHKSVGNSM) show a composition bias toward polar residues.

It belongs to the DNA polymerase type-Y family. As to quaternary structure, monomer. Requires Mg(2+) as cofactor.

Its subcellular location is the cytoplasm. The catalysed reaction is DNA(n) + a 2'-deoxyribonucleoside 5'-triphosphate = DNA(n+1) + diphosphate. Functionally, poorly processive, error-prone DNA polymerase involved in untargeted mutagenesis. Copies undamaged DNA at stalled replication forks, which arise in vivo from mismatched or misaligned primer ends. These misaligned primers can be extended by PolIV. Exhibits no 3'-5' exonuclease (proofreading) activity. May be involved in translesional synthesis, in conjunction with the beta clamp from PolIII. This Bacillus cereus (strain ZK / E33L) protein is DNA polymerase IV.